The sequence spans 316 residues: Pantothenate kinase (316 aa).

95-102 (GSVAVGKS) serves as a coordination point for ATP.

It belongs to the prokaryotic pantothenate kinase family.

It is found in the cytoplasm. The catalysed reaction is (R)-pantothenate + ATP = (R)-4'-phosphopantothenate + ADP + H(+). The protein operates within cofactor biosynthesis; coenzyme A biosynthesis; CoA from (R)-pantothenate: step 1/5. This chain is Pantothenate kinase, found in Serratia proteamaculans (strain 568).